Here is a 143-residue protein sequence, read N- to C-terminus: Peptide methionine sulfoxide reductase MsrB (143 aa).

Residues 16-139 enclose the MsrB domain; sequence DAELRRRLTP…NSAALNFESR (124 aa). Zn(2+) is bound by residues Cys55, Cys58, Cys104, and Cys107. Cys128 serves as the catalytic Nucleophile.

The protein belongs to the MsrB Met sulfoxide reductase family. The cofactor is Zn(2+).

It catalyses the reaction L-methionyl-[protein] + [thioredoxin]-disulfide + H2O = L-methionyl-(R)-S-oxide-[protein] + [thioredoxin]-dithiol. The sequence is that of Peptide methionine sulfoxide reductase MsrB from Burkholderia lata (strain ATCC 17760 / DSM 23089 / LMG 22485 / NCIMB 9086 / R18194 / 383).